The sequence spans 149 residues: Endoribonuclease YbeY (149 aa).

3 residues coordinate Zn(2+): histidine 113, histidine 117, and histidine 123.

This sequence belongs to the endoribonuclease YbeY family. Zn(2+) serves as cofactor.

The protein resides in the cytoplasm. In terms of biological role, single strand-specific metallo-endoribonuclease involved in late-stage 70S ribosome quality control and in maturation of the 3' terminus of the 16S rRNA. The sequence is that of Endoribonuclease YbeY from Saccharophagus degradans (strain 2-40 / ATCC 43961 / DSM 17024).